The primary structure comprises 90 residues: Small ribosomal subunit protein bS16 (90 aa).

It belongs to the bacterial ribosomal protein bS16 family.

This Lactococcus lactis subsp. lactis (strain IL1403) (Streptococcus lactis) protein is Small ribosomal subunit protein bS16.